The sequence spans 404 residues: Probable tRNA sulfurtransferase (404 aa).

Residues 60–165 (QPVVEALKLV…DEAAYISYEE (106 aa)) enclose the THUMP domain. ATP-binding positions include 183 to 184 (ML), 208 to 209 (HF), R265, G287, and Q296.

Belongs to the ThiI family.

Its subcellular location is the cytoplasm. It carries out the reaction [ThiI sulfur-carrier protein]-S-sulfanyl-L-cysteine + a uridine in tRNA + 2 reduced [2Fe-2S]-[ferredoxin] + ATP + H(+) = [ThiI sulfur-carrier protein]-L-cysteine + a 4-thiouridine in tRNA + 2 oxidized [2Fe-2S]-[ferredoxin] + AMP + diphosphate. The enzyme catalyses [ThiS sulfur-carrier protein]-C-terminal Gly-Gly-AMP + S-sulfanyl-L-cysteinyl-[cysteine desulfurase] + AH2 = [ThiS sulfur-carrier protein]-C-terminal-Gly-aminoethanethioate + L-cysteinyl-[cysteine desulfurase] + A + AMP + 2 H(+). It participates in cofactor biosynthesis; thiamine diphosphate biosynthesis. In terms of biological role, catalyzes the ATP-dependent transfer of a sulfur to tRNA to produce 4-thiouridine in position 8 of tRNAs, which functions as a near-UV photosensor. Also catalyzes the transfer of sulfur to the sulfur carrier protein ThiS, forming ThiS-thiocarboxylate. This is a step in the synthesis of thiazole, in the thiamine biosynthesis pathway. The sulfur is donated as persulfide by IscS. This Streptococcus pyogenes serotype M6 (strain ATCC BAA-946 / MGAS10394) protein is Probable tRNA sulfurtransferase.